Reading from the N-terminus, the 1224-residue chain is Integrin alpha pat-2 (1224 aa).

Positions 1–27 (MREGSFPRRTRLLCLLAAVVLISTVTS) are cleaved as a signal peptide. Residues 28 to 1153 (FNIDTKNVVL…ASEEGRDLPW (1126 aa)) lie on the Extracellular side of the membrane. FG-GAP repeat units lie at residues 29-96 (NIDT…TCRE), 110-173 (NGSH…KTEE), 180-235 (EPAR…TDRP), 236-292 (NTEY…MMIN), 293-347 (LTDE…KPQY), 364-423 (GKQL…GVRE), and 427-490 (QKIE…PESA). Residues asparagine 74, asparagine 110, asparagine 230, and asparagine 292 are each glycosylated (N-linked (GlcNAc...) asparagine). A glycan (N-linked (GlcNAc...) asparagine) is linked at asparagine 610. The Cell attachment site signature appears at 622–624 (RGD). Asparagine 681, asparagine 775, and asparagine 819 each carry an N-linked (GlcNAc...) asparagine glycan. Disordered stretches follow at residues 898-968 (LRIT…QNTG) and 981-1037 (DYEY…KARF). Residues 920 to 931 (REEDDESYEDET) show a composition bias toward acidic residues. A compositionally biased stretch (basic and acidic residues) spans 955–964 (VYERDEDKIR). Over residues 984–1003 (YIPDDQEYDGDDFEDDDEDF) the composition is skewed to acidic residues. A compositionally biased stretch (basic residues) spans 1008–1023 (SKRVKRAPVPKKKKKE). Basic and acidic residues predominate over residues 1024–1037 (GSRSGEPRSDKARF). A helical transmembrane segment spans residues 1154 to 1174 (WLYLLAILIGLAILILLILLL). Residues 1175–1224 (WRCGFFKRNRPPTEHAELRAEKQPAAHYADTQSRYAPQDQYSQGRHGQML) lie on the Cytoplasmic side of the membrane. The interval 1190 to 1224 (AELRAEKQPAAHYADTQSRYAPQDQYSQGRHGQML) is disordered. Residues 1204–1224 (DTQSRYAPQDQYSQGRHGQML) show a composition bias toward polar residues.

The protein belongs to the integrin alpha chain family. In terms of assembly, heterodimer of an alpha and a beta subunit. Alpha pat-2 associates with beta pat-3.

It localises to the membrane. Functionally, required for muscle development probably through the regulation of the actin-myosin cytoskeleton. During the formation of neuromuscular junctions at the larval stage, negatively regulates membrane protrusion from body wall muscles, probably through lamins such as epi-1, lam-2 and unc-52. Required for distal tip cell migration and dorsal pathfinding. Required for egg-laying. May play a role in cell motility and cell-cell interactions. The sequence is that of Integrin alpha pat-2 from Caenorhabditis briggsae.